The sequence spans 109 residues: MRTISRCRYIRSSAQKLRLVVNTIRGKKVSQALDILKYTNKKSAELVKKTLESAIANAEHNDNSDINNLKIIKIFVDSGPIIKRIMPRAKGRSDKIMKRTSHLTIVVSN.

It belongs to the universal ribosomal protein uL22 family. As to quaternary structure, part of the 50S ribosomal subunit.

In terms of biological role, this protein binds specifically to 23S rRNA; its binding is stimulated by other ribosomal proteins, e.g. L4, L17, and L20. It is important during the early stages of 50S assembly. It makes multiple contacts with different domains of the 23S rRNA in the assembled 50S subunit and ribosome. Functionally, the globular domain of the protein is located near the polypeptide exit tunnel on the outside of the subunit, while an extended beta-hairpin is found that lines the wall of the exit tunnel in the center of the 70S ribosome. The polypeptide is Large ribosomal subunit protein uL22 (Blochmanniella pennsylvanica (strain BPEN)).